We begin with the raw amino-acid sequence, 967 residues long: Muscular LMNA-interacting protein (967 aa).

Serine 129 bears the Phosphoserine mark. 7 disordered regions span residues 132–154 (EDEATCRQGEQGPPGGPGNIATR), 302–336 (GLASEAQKKMSTSNVLNPKEDVRTCPAPASGASLT), 432–462 (QKVKQTPPTSKKSLSSGSLTTGSTEQEHQAS), 506–628 (GSTL…SASH), 644–685 (QTLQ…TPSL), 786–838 (SMHS…SQLT), and 929–967 (FSVRDEQEKSPTLLSQDTYNKLGHPMVTIPEHDTLDSKE). Residues 144–811 (PPGGPGNIAT…GSETIKTPTT (668 aa)) are required for interaction with ISL1. A compositionally biased stretch (low complexity) spans 437–455 (TPPTSKKSLSSGSLTTGST). Polar residues predominate over residues 508–523 (TLRSNTTSPQPQTDTF). The segment covering 528–541 (VPSVTPVLSPLSSS) has biased composition (low complexity). A compositionally biased stretch (basic and acidic residues) spans 543-556 (GRKDGDSRTPEKNR). Composition is skewed to polar residues over residues 558 to 567 (ICIQPSTLAS) and 658 to 685 (GSATCPSRTQMPENTASNHSSRVSTPSL). Serine 792 is subject to Phosphoserine. A compositionally biased stretch (polar residues) spans 800-811 (MLGSETIKTPTT). Low complexity predominate over residues 826–835 (SSSSSTASES). Residues 938 to 947 (SPTLLSQDTY) are compositionally biased toward polar residues. The span at 958–967 (PEHDTLDSKE) shows a compositional bias: basic and acidic residues.

Directly interacts with LMNA. Interacts with ISL1 (via N-terminal domain); the interaction represses ISL1 transactivator activity. Interactions of ISL1 with MLIP1 and GCN5/KAT2A may be mutually exclusive. Post-translationally, may be ubiquitinated by UBE3C ubiquitin ligase; ubiquitination is followed by protein degradation. Predominantly expressed in the heart and skeletal muscle, but detected at lower levels in the lung and brain (at protein level). Also detected in smooth muscle, thymus and kidney. In brain, expressed by a subpopulation of cells within the hippocampus and cortex. In heart, expressed by cardiomyocytes. Expression is reduced in hypertrophic hearts at the transcript level. However, expression in hypertrophic hearts induced by transverse aortic constriction do not differ from control at the protein level.

It localises to the nucleus. The protein localises to the nucleus envelope. The protein resides in the PML body. Its subcellular location is the cytoplasm. It is found in the cytosol. It localises to the cell membrane. The protein localises to the sarcolemma. In terms of biological role, required for myoblast differentiation into myotubes, possibly acting as a transcriptional regulator of the myogenic program. Required for cardiac adaptation to stress through integrated regulation of the AKT/mTOR pathways and FOXO1. Regulates cardiac homeostasis and plays a role in the protection against cardiac hypertrophy. Binds chromatin. May act as a transcriptional cofactor for ISL1, repressing its transcriptional activity. May also repress MYOCD transcriptional activity. The chain is Muscular LMNA-interacting protein from Mus musculus (Mouse).